A 234-amino-acid polypeptide reads, in one-letter code: MMSHSFVQISDCHIDNVEYAMGVNTHVNLKKIINKIINIDTDALLISGDLTHNGTITSYKTLQQILFPVQIKLLVISGNHDIDNNLNTIFSKNLFSQFTLRKWEIISTNSVQTSKTSGFLTKNELKKLNFNLTQSIAKYILIVLHHPIVPMNSTWDDSLSLENPKALFNVLDKYPKIQAILFGHAHQAAEFSRLGVKIISCPSTALQFNNETRIGFNHYTLYDNGQLTIDTQWI.

Residues D11, H13, D49, N79, H145, H184, and H186 each contribute to the Fe cation site. AMP-binding positions include H13, D49, and 79–80 (NH). An AMP-binding site is contributed by H186.

It belongs to the cyclic nucleotide phosphodiesterase class-III family. The cofactor is Fe(2+).

This chain is Probable cyclic nucleotide phosphodiesterase Rmag_0669, found in Ruthia magnifica subsp. Calyptogena magnifica.